The chain runs to 324 residues: uncharacterized protein (324 aa).

Residues 1-58 (MDIKVMEYAAEIARRQSFTKAAEHLHIAQPSLSQQIKKLEAELGLTLFHRSHGSVTLT) form the HTH lysR-type domain. Positions 18–37 (FTKAAEHLHIAQPSLSQQIK) form a DNA-binding region, H-T-H motif.

This sequence belongs to the LysR transcriptional regulatory family.

This is an uncharacterized protein from Bacillus subtilis (strain 168).